The sequence spans 444 residues: Phosphoglucosamine mutase (444 aa).

Ser102 serves as the catalytic Phosphoserine intermediate. The Mg(2+) site is built by Ser102, Asp241, Asp243, and Asp245. Position 102 is a phosphoserine (Ser102).

The protein belongs to the phosphohexose mutase family. Requires Mg(2+) as cofactor. In terms of processing, activated by phosphorylation.

The catalysed reaction is alpha-D-glucosamine 1-phosphate = D-glucosamine 6-phosphate. Its function is as follows. Catalyzes the conversion of glucosamine-6-phosphate to glucosamine-1-phosphate. The protein is Phosphoglucosamine mutase of Histophilus somni (strain 129Pt) (Haemophilus somnus).